A 316-amino-acid polypeptide reads, in one-letter code: Aspartate carbamoyltransferase catalytic subunit (316 aa).

Positions 58 and 59 each coordinate carbamoyl phosphate. Lys86 contacts L-aspartate. 3 residues coordinate carbamoyl phosphate: Arg108, His136, and Gln139. Positions 169 and 223 each coordinate L-aspartate. Carbamoyl phosphate is bound by residues Gly264 and Pro265.

This sequence belongs to the aspartate/ornithine carbamoyltransferase superfamily. ATCase family. Heterododecamer (2C3:3R2) of six catalytic PyrB chains organized as two trimers (C3), and six regulatory PyrI chains organized as three dimers (R2).

The catalysed reaction is carbamoyl phosphate + L-aspartate = N-carbamoyl-L-aspartate + phosphate + H(+). The protein operates within pyrimidine metabolism; UMP biosynthesis via de novo pathway; (S)-dihydroorotate from bicarbonate: step 2/3. Functionally, catalyzes the condensation of carbamoyl phosphate and aspartate to form carbamoyl aspartate and inorganic phosphate, the committed step in the de novo pyrimidine nucleotide biosynthesis pathway. The chain is Aspartate carbamoyltransferase catalytic subunit from Granulibacter bethesdensis (strain ATCC BAA-1260 / CGDNIH1).